We begin with the raw amino-acid sequence, 245 residues long: Thiopurine S-methyltransferase (245 aa).

29–40 (WQDKWVSHKIGF) provides a ligand contact to S-adenosyl-L-methionine. Phe-40 provides a ligand contact to substrate. Position 58 is an N6-acetyllysine (Lys-58). Residues Leu-69, Glu-90, 134-135 (SI), and Arg-152 each bind S-adenosyl-L-methionine.

The protein belongs to the class I-like SAM-binding methyltransferase superfamily. TPMT family. Monomer.

The protein localises to the cytoplasm. The catalysed reaction is S-adenosyl-L-methionine + a thiopurine = S-adenosyl-L-homocysteine + a thiopurine S-methylether.. The sequence is that of Thiopurine S-methyltransferase (TPMT) from Oryctolagus cuniculus (Rabbit).